Reading from the N-terminus, the 220-residue chain is Deoxyribose-phosphate aldolase (220 aa).

Asp89 serves as the catalytic Proton donor/acceptor. The Schiff-base intermediate with acetaldehyde role is filled by Lys151. The Proton donor/acceptor role is filled by Lys180.

It belongs to the DeoC/FbaB aldolase family. DeoC type 1 subfamily.

The protein localises to the cytoplasm. The catalysed reaction is 2-deoxy-D-ribose 5-phosphate = D-glyceraldehyde 3-phosphate + acetaldehyde. Its pathway is carbohydrate degradation; 2-deoxy-D-ribose 1-phosphate degradation; D-glyceraldehyde 3-phosphate and acetaldehyde from 2-deoxy-alpha-D-ribose 1-phosphate: step 2/2. Functionally, catalyzes a reversible aldol reaction between acetaldehyde and D-glyceraldehyde 3-phosphate to generate 2-deoxy-D-ribose 5-phosphate. The protein is Deoxyribose-phosphate aldolase of Thermus thermophilus (strain ATCC BAA-163 / DSM 7039 / HB27).